We begin with the raw amino-acid sequence, 198 residues long: Translation machinery-associated protein 22 (198 aa).

In terms of domain architecture, SUI1 spans 100-171; that stretch reads IIIKRSERTK…EIVEMIRQQV (72 aa).

Belongs to the DENR family. In terms of assembly, interacts with the 40S ribosomal subunit.

The protein resides in the cytoplasm. This is Translation machinery-associated protein 22 (TMA22) from Cryptococcus neoformans var. neoformans serotype D (strain B-3501A) (Filobasidiella neoformans).